Consider the following 473-residue polypeptide: UDP-N-acetylmuramate--L-alanine ligase (473 aa).

123–129 (GTHGKTT) is an ATP binding site.

This sequence belongs to the MurCDEF family.

It localises to the cytoplasm. It carries out the reaction UDP-N-acetyl-alpha-D-muramate + L-alanine + ATP = UDP-N-acetyl-alpha-D-muramoyl-L-alanine + ADP + phosphate + H(+). It functions in the pathway cell wall biogenesis; peptidoglycan biosynthesis. Functionally, cell wall formation. The protein is UDP-N-acetylmuramate--L-alanine ligase of Marinomonas sp. (strain MWYL1).